Reading from the N-terminus, the 654-residue chain is Spindle assembly abnormal protein 6 homolog (654 aa).

The 53-residue stretch at 39–91 (VHRKDLVIRLTDDTDPFFLYNLVISEEDFQSLKLQQGLLVDFLAFPQKFIDLL) folds into the PISA domain. Positions 175–471 (TRQLHITQET…QLLKNNEKLI (297 aa)) form a coiled coil. Serine 509 carries the post-translational modification Phosphoserine. A disordered region spans residues 568 to 589 (ASIDGQPGAAVNRPCSNDKENG). Serine 612 bears the Phosphoserine mark. The segment covering 634 to 644 (SKPTVLPSSSS) has biased composition (low complexity). Residues 634–654 (SKPTVLPSSSSAYFPGQLPSS) are disordered. A Phosphoserine modification is found at serine 654.

In terms of assembly, nine homodimers form a cartwheel structure with an internal diameter of 23 nm and radial spokes connecting to the microtubule triplets. Forms a complex with CPAP and STIL. Interacts with FBXW5. Interacts with NUP62 and TUBG1 at the centrosome. Interacts with CENATAC; the interaction increases with CENATAC acetylation. Interacts with FZR1; the interaction is regulated by CENATAC and leads to SASS6 proteasomal degradation. In terms of processing, ubiquitinated by the SCF(FBXW5) E3 ubiquitin-protein ligase complex during S phase, leading to its degradation and preventing centriole reduplication. Ubiquitinated by the anaphase promoting complex/cyclosome (APC/C) E3 ubiquitin-protein ligase complex, leading to its degradation and preventing centriole reduplication.

The protein resides in the cytoplasm. It localises to the cytoskeleton. It is found in the microtubule organizing center. The protein localises to the centrosome. Its subcellular location is the centriole. Central scaffolding component of the centrioles ensuring their 9-fold symmetry. Required for centrosome biogenesis and duplication. Required both for mother-centriole-dependent centriole duplication and deuterosome-dependent centriole amplification in multiciliated cells. Not required for centriole formation in embryonic stem cells but necessary to maintain centriole architecture. Required for the recruitment of STIL to the procentriole and for STIL-mediated centriole amplification. This Mus musculus (Mouse) protein is Spindle assembly abnormal protein 6 homolog.